A 411-amino-acid polypeptide reads, in one-letter code: Alpha-N-acetylgalactosaminidase (411 aa).

A signal peptide spans 1–17; it reads MLLKTVLLLGHVAQVLM. 2 cysteine pairs are disulfide-bonded: Cys38–Cys80 and Cys42–Cys49. 78–79 serves as a coordination point for substrate; that stretch reads DD. Residue Asn124 is glycosylated (N-linked (GlcNAc...) asparagine). Cys127 and Cys158 form a disulfide bridge. Substrate is bound at residue Lys154. The Nucleophile role is filled by Asp156. N-linked (GlcNAc...) asparagine glycosylation occurs at Asn177. Cys187 and Cys209 are joined by a disulfide. Ser188 is a substrate binding site. N-linked (GlcNAc...) asparagine glycosylation occurs at Asn201. Positions 213 and 217 each coordinate substrate. Asp217 functions as the Proton donor in the catalytic mechanism. Ser322 and Ser332 each carry phosphoserine. 2 N-linked (GlcNAc...) asparagine glycosylation sites follow: Asn359 and Asn385.

Belongs to the glycosyl hydrolase 27 family. Homodimer.

The protein resides in the lysosome. The enzyme catalyses Cleavage of non-reducing alpha-(1-&gt;3)-N-acetylgalactosamine residues from human blood group A and AB mucin glycoproteins, Forssman hapten and blood group A lacto series glycolipids.. It carries out the reaction a neolactoside IV(3)-alpha-GalNAc,IV(2)-alpha-Fuc-nLc4Cer(d18:1(4E)) + H2O = a neolactoside IV(2)-alpha-Fuc-nLc4Cer(d18:1(4E)) + N-acetyl-alpha-D-galactosamine. It catalyses the reaction a neolactoside IV(3)-alpha-GalNAc,IV(2)-alpha-Fuc-nLc4Cer(d18:0) + H2O = a neolactoside IV(2)-alpha-Fuc-nLc4Cer(d18:0) + N-acetyl-alpha-D-galactosamine. The catalysed reaction is a globoside IV3GalNAc-Gb4Cer + H2O = N-acetyl-alpha-D-galactosamine + a globoside Gb4Cer. Functionally, removes terminal alpha-N-acetylgalactosamine residues from glycolipids and glycopeptides. Required for the breakdown of glycolipids. The chain is Alpha-N-acetylgalactosaminidase from Homo sapiens (Human).